The primary structure comprises 134 residues: MFADIAVQHWAFAIYVIAAICLCLVMIGLAALLGGRAHGRAKNTPFESGVDSVGNARLRFSAKFYLVAMFFVIFDVEALYLFAWSVSVRESGWVGFIEAAIFIGLLLVGLLYLWRIGALDSAPKKRALTDKKPD.

3 helical membrane passes run F12–L32, F64–W84, and W93–L113.

The protein belongs to the complex I subunit 3 family. NDH-1 is composed of 14 different subunits. Subunits NuoA, H, J, K, L, M, N constitute the membrane sector of the complex.

The protein localises to the cell inner membrane. It catalyses the reaction a quinone + NADH + 5 H(+)(in) = a quinol + NAD(+) + 4 H(+)(out). Its function is as follows. NDH-1 shuttles electrons from NADH, via FMN and iron-sulfur (Fe-S) centers, to quinones in the respiratory chain. The immediate electron acceptor for the enzyme in this species is believed to be ubiquinone. Couples the redox reaction to proton translocation (for every two electrons transferred, four hydrogen ions are translocated across the cytoplasmic membrane), and thus conserves the redox energy in a proton gradient. The sequence is that of NADH-quinone oxidoreductase subunit A from Aeromonas salmonicida (strain A449).